Reading from the N-terminus, the 219-residue chain is Thiamine-phosphate synthase (219 aa).

Residues 44–48 (QFREK) and asparagine 79 contribute to the 4-amino-2-methyl-5-(diphosphooxymethyl)pyrimidine site. Mg(2+) contacts are provided by aspartate 80 and aspartate 99. Residue serine 117 participates in 4-amino-2-methyl-5-(diphosphooxymethyl)pyrimidine binding. Residue 143–145 (TST) coordinates 2-[(2R,5Z)-2-carboxy-4-methylthiazol-5(2H)-ylidene]ethyl phosphate. Residue lysine 146 participates in 4-amino-2-methyl-5-(diphosphooxymethyl)pyrimidine binding. 2-[(2R,5Z)-2-carboxy-4-methylthiazol-5(2H)-ylidene]ethyl phosphate contacts are provided by residues glycine 175 and 195-196 (IS).

Belongs to the thiamine-phosphate synthase family. It depends on Mg(2+) as a cofactor.

It catalyses the reaction 2-[(2R,5Z)-2-carboxy-4-methylthiazol-5(2H)-ylidene]ethyl phosphate + 4-amino-2-methyl-5-(diphosphooxymethyl)pyrimidine + 2 H(+) = thiamine phosphate + CO2 + diphosphate. It carries out the reaction 2-(2-carboxy-4-methylthiazol-5-yl)ethyl phosphate + 4-amino-2-methyl-5-(diphosphooxymethyl)pyrimidine + 2 H(+) = thiamine phosphate + CO2 + diphosphate. The enzyme catalyses 4-methyl-5-(2-phosphooxyethyl)-thiazole + 4-amino-2-methyl-5-(diphosphooxymethyl)pyrimidine + H(+) = thiamine phosphate + diphosphate. It participates in cofactor biosynthesis; thiamine diphosphate biosynthesis; thiamine phosphate from 4-amino-2-methyl-5-diphosphomethylpyrimidine and 4-methyl-5-(2-phosphoethyl)-thiazole: step 1/1. Its function is as follows. Condenses 4-methyl-5-(beta-hydroxyethyl)thiazole monophosphate (THZ-P) and 2-methyl-4-amino-5-hydroxymethyl pyrimidine pyrophosphate (HMP-PP) to form thiamine monophosphate (TMP). This chain is Thiamine-phosphate synthase, found in Bacillus cereus (strain B4264).